A 429-amino-acid polypeptide reads, in one-letter code: MPAIVIVGAQWGDEGKGKATDLLGGRVDYVVKPNGGNNAGHTVVVGGEKYELKLLPAGILSPNAVPIIGNGCVVNLEALFQEIDGLQARGADTSKLRVSANAHLVAPYHQVLDKVTERFLGKRAIGTTGRGIGPAYMDKVARLGIRVQDVFDESILRQKVEGSLHQKNEVLVKIYNRRSVVVDEIVEYFLSFAERLRPLVIDSTLVLNTALDEGKVVLMEGGQATFLDVDHGTYPFVTSSNPTAGGASVGSGIGPTRISRSIGIIKAYTTRVGAGPFPTELFDEMGVYLQKTGGEFGVNTGRPRRCGWYDAVLARHASRVNGFTDYFVTKLDVLTGIEQIPVCVAYDVDGVRHDEMPMTQTEFHHAKPIFEYFDGWTEDITGARTLADLPENARNYVLALEKLSGTRFSAIGVGPDRDQTIVVNDLIND.

Residues 12 to 18 (GDEGKGK) and 40 to 42 (GHT) each bind GTP. The Proton acceptor role is filled by Asp-13. Mg(2+) contacts are provided by Asp-13 and Gly-40. Residues 13-16 (DEGK), 38-41 (NAGH), Thr-128, Arg-142, Gln-223, Thr-238, and Arg-302 contribute to the IMP site. His-41 functions as the Proton donor in the catalytic mechanism. 298-304 (VNTGRPR) lines the substrate pocket. GTP is bound by residues Arg-304, 330-332 (KLD), and 412-414 (GVG).

This sequence belongs to the adenylosuccinate synthetase family. In terms of assembly, homodimer. The cofactor is Mg(2+).

It is found in the cytoplasm. The catalysed reaction is IMP + L-aspartate + GTP = N(6)-(1,2-dicarboxyethyl)-AMP + GDP + phosphate + 2 H(+). It functions in the pathway purine metabolism; AMP biosynthesis via de novo pathway; AMP from IMP: step 1/2. Its function is as follows. Plays an important role in the de novo pathway of purine nucleotide biosynthesis. Catalyzes the first committed step in the biosynthesis of AMP from IMP. This chain is Adenylosuccinate synthetase, found in Pseudarthrobacter chlorophenolicus (strain ATCC 700700 / DSM 12829 / CIP 107037 / JCM 12360 / KCTC 9906 / NCIMB 13794 / A6) (Arthrobacter chlorophenolicus).